The chain runs to 288 residues: Nucleotide-binding protein Mlg_2233 (288 aa).

11-18 (GLSGSGKS) provides a ligand contact to ATP. 63-66 (DARN) serves as a coordination point for GTP.

The protein belongs to the RapZ-like family.

In terms of biological role, displays ATPase and GTPase activities. This Alkalilimnicola ehrlichii (strain ATCC BAA-1101 / DSM 17681 / MLHE-1) protein is Nucleotide-binding protein Mlg_2233.